The following is an 807-amino-acid chain: MPKHDSLWLKSLRWIQKHLVHTIVVPQDPFADLNLDASRPLAYVMKTESLSDIAALSEITAKLGLPSPYEPLVANGVIAPRVVCLQGRKPLFGERAGNEPFLECFMRLLAVHKERPELDIQLVPVSLYWGRTPGKEDDTMKAAVFERENPTWLRKCLMILFLGRHNFVQFSNAVSLRYMADEHGTDMGIAHKLARVARVHFRRQRKVMTGPVLPNRQALFHSLLKSESLRKAIQEEAANKKISETQARETAIEYLDEIAADYSDSLVRIAERFLTWLWNKLYSGINIKGAEQVRQLHHDGHEIVYVPCHRSHMDYLLLSYILYYQGMVPPHIAAGINLNFWPAGPMFRRGGAFFIRRSFNGNKLYTAVFREYLDQLFAKGYSVEYFSEGGRSRTGRLLAPKTGMIAMTMNSVLRGIERPVTLVPVYLGYDHVMEVATYHKELSGKKKKKESVWQVFGAIRKLGNFGQGYVNFGEPITLQNFLNERAPNWRTELADDPEQKPSWLTPAVNVLANRVMTNINDAAAASSVTLTSLVLLATDQNALERSLLERQLDLYLTLLKKVPYTTYTSVAEGDGKHLVQQGLELNKFVVCADPLGEIVSIEASQAVSMTYYRNNIIHLFIVPSLIASCLTHNKQIPRQQVVSIVADFYPLLKAELFMGIKDVPAYVNQVLDFFIEQGLVVETDTLTVVPEHTSQLLLLASSVSETLQRYAIIFNLLANRPKMERSELESESHLLAQRLGALHGITAPEFYDKKLYGTLSVKLKELGYLADNQDKSNINRIRDQANSLLRPSVKQTIVASVTAEHTV.

The HXXXXD motif motif lies at 308 to 313 (CHRSHM).

Belongs to the GPAT/DAPAT family.

The protein resides in the cell inner membrane. The enzyme catalyses sn-glycerol 3-phosphate + an acyl-CoA = a 1-acyl-sn-glycero-3-phosphate + CoA. It functions in the pathway phospholipid metabolism; CDP-diacylglycerol biosynthesis; CDP-diacylglycerol from sn-glycerol 3-phosphate: step 1/3. This chain is Glycerol-3-phosphate acyltransferase, found in Shewanella baltica (strain OS155 / ATCC BAA-1091).